Here is a 207-residue protein sequence, read N- to C-terminus: dITP/XTP pyrophosphatase (207 aa).

7-12 (SNNAKK) contacts substrate. Asp72 serves as the catalytic Proton acceptor. Asp72 serves as a coordination point for Mg(2+). Substrate-binding positions include Ser73, 155-158 (FGYD), Lys184, and 189-190 (HR).

This sequence belongs to the HAM1 NTPase family. Homodimer. Mg(2+) is required as a cofactor.

The enzyme catalyses XTP + H2O = XMP + diphosphate + H(+). It catalyses the reaction dITP + H2O = dIMP + diphosphate + H(+). The catalysed reaction is ITP + H2O = IMP + diphosphate + H(+). Pyrophosphatase that catalyzes the hydrolysis of nucleoside triphosphates to their monophosphate derivatives, with a high preference for the non-canonical purine nucleotides XTP (xanthosine triphosphate), dITP (deoxyinosine triphosphate) and ITP. Seems to function as a house-cleaning enzyme that removes non-canonical purine nucleotides from the nucleotide pool, thus preventing their incorporation into DNA/RNA and avoiding chromosomal lesions. The sequence is that of dITP/XTP pyrophosphatase from Corynebacterium efficiens (strain DSM 44549 / YS-314 / AJ 12310 / JCM 11189 / NBRC 100395).